A 370-amino-acid chain; its full sequence is Aminomethyltransferase (370 aa).

The protein belongs to the GcvT family. As to quaternary structure, the glycine cleavage system is composed of four proteins: P, T, L and H.

The catalysed reaction is N(6)-[(R)-S(8)-aminomethyldihydrolipoyl]-L-lysyl-[protein] + (6S)-5,6,7,8-tetrahydrofolate = N(6)-[(R)-dihydrolipoyl]-L-lysyl-[protein] + (6R)-5,10-methylene-5,6,7,8-tetrahydrofolate + NH4(+). Its function is as follows. The glycine cleavage system catalyzes the degradation of glycine. This Stenotrophomonas maltophilia (strain R551-3) protein is Aminomethyltransferase.